We begin with the raw amino-acid sequence, 416 residues long: Lactose permease (416 aa).

Residues 1-13 (MYYLKNTNFWMFG) are Cytoplasmic-facing. A helical transmembrane segment spans residues 14–34 (FFFFFYFFIMGAYFPFFPIWL). Residues 35–45 (HEVNHISKGDT) lie on the Periplasmic side of the membrane. A helical transmembrane segment spans residues 46-66 (GIIFACISLFSLLFQPIFGLL). The Cytoplasmic segment spans residues 67–75 (SDKLGLRKH). The helical transmembrane segment at 76–96 (LLWVITGMLVMFAPFFIYVFG) threads the bilayer. A topological domain (periplasmic) is located at residue Pro97. A helical membrane pass occupies residues 98 to 118 (LLQVNILLGSIVGGIYLGFIY). Residues 119–144 (NAGAPAIEAYIEKASRRSNFEFGRAR) lie on the Cytoplasmic side of the membrane. Residues 145-165 (MFGCVGWALCASIAGIMFTIN) form a helical membrane-spanning segment. A topological domain (periplasmic) is located at residue Asn166. The helical transmembrane segment at 167–187 (QFVFWLGSGCAVILALLLLFS) threads the bilayer. Residues 188 to 211 (KTDVPSSAKVADAVGANNSAFSLK) lie on the Cytoplasmic side of the membrane. The helical transmembrane segment at 212-232 (LALELFKQPKLWLISLYVVGV) threads the bilayer. The Periplasmic segment spans residues 233-262 (SCTYDVFDQQFANFFTSFFATGEQGTRVFG). Residues 263–283 (YVTTMGELLNASIMFFAPLIV) form a helical membrane-spanning segment. Topologically, residues 284 to 290 (NRIGGKN) are cytoplasmic. The chain crosses the membrane as a helical span at residues 291–309 (ALLLAGTIMSVRIIGSHSH). Residues 310-314 (TALEV) lie on the Periplasmic side of the membrane. Residues 315–336 (VILKTLHMFEIPFLIVGCFKYI) form a helical membrane-spanning segment. Residues 337 to 347 (TSQFEVRFSAT) are Cytoplasmic-facing. A helical membrane pass occupies residues 348-368 (IYLVCFCFFKQLAMIFMSVLA). Over 369 to 378 (GKMYESIGFQ) the chain is Periplasmic. A helical transmembrane segment spans residues 379-399 (GAYLVLGIIRVSFTLISVFTL). The Cytoplasmic segment spans residues 400–416 (SGPGPFSLLRRRESVAL).

Belongs to the major facilitator superfamily. Oligosaccharide:H(+) symporter (OHS) (TC 2.A.1.5) family.

The protein localises to the cell inner membrane. The catalysed reaction is lactose(in) + H(+)(in) = lactose(out) + H(+)(out). Functionally, responsible for transport of beta-galactosides into the cell, with the concomitant import of a proton (symport system). The sequence is that of Lactose permease (lacY) from Citrobacter freundii.